The chain runs to 248 residues: tRNA (guanine-N(7)-)-methyltransferase (248 aa).

S-adenosyl-L-methionine-binding residues include glutamate 80, glutamate 105, aspartate 132, and aspartate 155. Aspartate 155 is an active-site residue. Residues lysine 159, aspartate 191, and 223–226 each bind substrate; that span reads TKFE.

Belongs to the class I-like SAM-binding methyltransferase superfamily. TrmB family.

It catalyses the reaction guanosine(46) in tRNA + S-adenosyl-L-methionine = N(7)-methylguanosine(46) in tRNA + S-adenosyl-L-homocysteine. Its pathway is tRNA modification; N(7)-methylguanine-tRNA biosynthesis. Its function is as follows. Catalyzes the formation of N(7)-methylguanine at position 46 (m7G46) in tRNA. This is tRNA (guanine-N(7)-)-methyltransferase from Nocardioides sp. (strain ATCC BAA-499 / JS614).